A 352-amino-acid polypeptide reads, in one-letter code: Quinolinate synthase (352 aa).

Residues His48 and Ser69 each coordinate iminosuccinate. [4Fe-4S] cluster is bound at residue Cys114. Residues 140–142 and Ser157 each bind iminosuccinate; that span reads YAN. Residue Cys201 participates in [4Fe-4S] cluster binding. Residues 227-229 and Thr244 each bind iminosuccinate; that span reads HPE. Cys298 is a binding site for [4Fe-4S] cluster.

It belongs to the quinolinate synthase family. Type 1 subfamily. [4Fe-4S] cluster is required as a cofactor.

The protein localises to the cytoplasm. It catalyses the reaction iminosuccinate + dihydroxyacetone phosphate = quinolinate + phosphate + 2 H2O + H(+). Its pathway is cofactor biosynthesis; NAD(+) biosynthesis; quinolinate from iminoaspartate: step 1/1. Its function is as follows. Catalyzes the condensation of iminoaspartate with dihydroxyacetone phosphate to form quinolinate. This chain is Quinolinate synthase, found in Ectopseudomonas mendocina (strain ymp) (Pseudomonas mendocina).